The following is a 330-amino-acid chain: Diacylglycerol acyltransferase/mycolyltransferase Ag85A (330 aa).

A signal peptide spans 1–42 (MKFVDRFRGAVAGMLRRLVVEAMGVALLSALIGVVGSAPAEA). 84-85 (LR) is a substrate binding site. A fibronectin-binding region spans residues 100-110 (FEWYYQSGISV). The cysteines at positions 129 and 134 are disulfide-linked. Substrate is bound by residues Ser168 and Asp196. Residue Ser168 is the Nucleophile of the active site. The active site involves Glu272. Substrate is bound by residues 274 to 277 (LVRT), Lys281, and 304 to 306 (HSW). Residue His304 is part of the active site.

Belongs to the mycobacterial A85 antigen family. Homodimer.

The protein localises to the secreted. Its subcellular location is the cell wall. It is found in the cytoplasm. It catalyses the reaction an acyl-CoA + a 1,2-diacyl-sn-glycerol = a triacyl-sn-glycerol + CoA. The enzyme catalyses 2 alpha,alpha'-trehalose 6-mycolate = alpha,alpha'-trehalose 6,6'-bismycolate + alpha,alpha-trehalose. In terms of biological role, the antigen 85 proteins (FbpA, FbpB, FbpC) are responsible for the high affinity of mycobacteria for fibronectin, a large adhesive glycoprotein, which facilitates the attachment of M.tuberculosis to murine alveolar macrophages (AMs). They also help to maintain the integrity of the cell wall by catalyzing the transfer of mycolic acids to cell wall arabinogalactan, and through the synthesis of alpha,alpha-trehalose dimycolate (TDM, cord factor). They catalyze the transfer of a mycoloyl residue from one molecule of alpha,alpha-trehalose monomycolate (TMM) to another TMM, leading to the formation of TDM. FbpA mediates triacylglycerol (TAG) formation with long-chain acyl-CoA as the acyl donor and 1,2-dipalmitoyl-sn-glycerol (1,2-dipalmitin) as the acyl acceptor. It has a preference for C26:0-CoA over C18:1-CoA. The sequence is that of Diacylglycerol acyltransferase/mycolyltransferase Ag85A (fbpA) from Mycobacterium leprae (strain TN).